The primary structure comprises 1174 residues: Lysylphosphatidylglycerol biosynthesis bifunctional protein LysX (1174 aa).

The tract at residues 1–665 (MGVGLHLTVP…LLHHDGSAPD (665 aa)) is phosphatidylglycerol lysyltransferase. A disordered region spans residues 9–36 (VPGLRRDGRGVQSNSHDTSSKTTADISR). A compositionally biased stretch (polar residues) spans 19-33 (VQSNSHDTSSKTTAD). The next 7 helical transmembrane spans lie at 82–102 (VPAA…LASV), 124–144 (FPDT…ALTA), 148–168 (IAWL…AAEI), 179–199 (FGEN…VLGY), 216–236 (AVWL…VELF), 274–294 (AIFG…LFLS), and 614–634 (VIPR…LPFS). The segment at 666 to 1174 (VSGLRQVGLT…TLPFPLAKPH (509 aa)) is lysine--tRNA ligase. A DNA-binding region (OB) is located at residues 728-806 (VSVSGRIMRI…SLIVSGWRLI (79 aa)). Residues Asp-1086 and Glu-1093 each contribute to the Mg(2+) site.

In the N-terminal section; belongs to the LPG synthetase family. This sequence in the C-terminal section; belongs to the class-II aminoacyl-tRNA synthetase family. Requires Mg(2+) as cofactor.

The protein resides in the cell membrane. It carries out the reaction tRNA(Lys) + L-lysine + ATP = L-lysyl-tRNA(Lys) + AMP + diphosphate. The enzyme catalyses L-lysyl-tRNA(Lys) + a 1,2-diacyl-sn-glycero-3-phospho-(1'-sn-glycerol) = a 1,2-diacyl-sn-glycero-3-phospho-1'-(3'-O-L-lysyl)-sn-glycerol + tRNA(Lys). Functionally, catalyzes the production of L-lysyl-tRNA(Lys)transfer and the transfer of a lysyl group from L-lysyl-tRNA(Lys) to membrane-bound phosphatidylglycerol (PG), which produces lysylphosphatidylglycerol (LPG), one of the components of the bacterial membrane with a positive net charge. LPG synthesis contributes to the resistance to cationic antimicrobial peptides (CAMPs) and likely protects M.tuberculosis against the CAMPs produced by competiting microorganisms (bacteriocins). In fact, the modification of anionic phosphatidylglycerol with positively charged L-lysine results in repulsion of the peptides. This Mycobacterium tuberculosis (strain KZN 1435 / MDR) protein is Lysylphosphatidylglycerol biosynthesis bifunctional protein LysX (lysX).